A 75-amino-acid chain; its full sequence is MNKKILLVIFIVTMLIVDEVNSFEFGSFIKRMWRSKLAKKLRAKGKELLRDYANRVLSPEEEAAAPAPVPAKRRR.

Residues 1–22 form the signal peptide; sequence MNKKILLVIFIVTMLIVDEVNS.

Belongs to the non-disulfide-bridged peptide (NDBP) superfamily. Long chain multifunctional peptide (group 2) family. In terms of tissue distribution, expressed by the venom gland.

The protein localises to the secreted. Its function is as follows. Antimicrobial peptide. In Mesobuthus eupeus (Lesser Asian scorpion), this protein is Antimicrobial peptide Meucin-49-1.